The primary structure comprises 977 residues: GAS2-like protein pickled eggs (977 aa).

The region spanning 20 to 159 (EAMREDLAEW…CLLEVARRGA (140 aa)) is the Calponin-homology (CH) domain. The tract at residues 218-245 (VETDLYDDSDDSETEDDGDQNPVLMYGP) is disordered. Positions 221–236 (DLYDDSDDSETEDDGD) are enriched in acidic residues. The GAR domain maps to 252–324 (NDLKSLDEMV…HYLDKHDPCR (73 aa)). 5 disordered regions span residues 397–543 (PTLQ…SEIS), 557–624 (AQKR…VCDG), 666–685 (VANT…RSPL), 693–803 (IDNS…KGRS), and 910–977 (NLER…TELY). Polar residues-rich tracts occupy residues 399–428 (LQNG…NQQA) and 436–454 (ATGS…QLLG). Residues 502–527 (GGSGVGSAAGGVSSGSAGSGVAGEQG) are compositionally biased toward gly residues. Over residues 577 to 589 (RLDQTSSDSQISP) the composition is skewed to polar residues. The span at 601 to 620 (ILEEEDLNGQDREEDQEDYS) shows a compositional bias: acidic residues. 2 stretches are compositionally biased toward polar residues: residues 666–677 (VANTMGNPTPNL) and 731–741 (TRNSTGATTTP). Residues 928–953 (SSAASSCESNNSNAGAGSGAAAGSAS) are compositionally biased toward low complexity.

This sequence belongs to the GAS2 family. As to expression, expressed in the ovary and the ring canals of the germline cells. In larvae, expressed in the notal region of the wing disk.

Its subcellular location is the cytoplasm. The protein resides in the cytoskeleton. It localises to the cell cortex. Its function is as follows. Essential for development and viability. Required for ovary development and oogenesis, and is essential for the development of the indirect flight muscles. May act as a negative regulator of the Notch signaling pathway in certain tissues, such as the muscle precursors and ovaries. May function as a linker protein between the actin and microtubule cytoskeletons. The polypeptide is GAS2-like protein pickled eggs (Drosophila melanogaster (Fruit fly)).